The sequence spans 295 residues: Phosphoribosylaminoimidazole-succinocarboxamide synthase (295 aa).

It belongs to the SAICAR synthetase family.

The catalysed reaction is 5-amino-1-(5-phospho-D-ribosyl)imidazole-4-carboxylate + L-aspartate + ATP = (2S)-2-[5-amino-1-(5-phospho-beta-D-ribosyl)imidazole-4-carboxamido]succinate + ADP + phosphate + 2 H(+). Its pathway is purine metabolism; IMP biosynthesis via de novo pathway; 5-amino-1-(5-phospho-D-ribosyl)imidazole-4-carboxamide from 5-amino-1-(5-phospho-D-ribosyl)imidazole-4-carboxylate: step 1/2. The polypeptide is Phosphoribosylaminoimidazole-succinocarboxamide synthase (Desulforapulum autotrophicum (strain ATCC 43914 / DSM 3382 / VKM B-1955 / HRM2) (Desulfobacterium autotrophicum)).